The following is a 224-amino-acid chain: Precorrin-2 dehydrogenase (224 aa).

NAD(+) contacts are provided by residues 26–27 (SV) and 47–50 (EFSQ).

It belongs to the precorrin-2 dehydrogenase / sirohydrochlorin ferrochelatase family. In terms of assembly, homodimer.

It catalyses the reaction precorrin-2 + NAD(+) = sirohydrochlorin + NADH + 2 H(+). The protein operates within porphyrin-containing compound metabolism; siroheme biosynthesis; sirohydrochlorin from precorrin-2: step 1/1. In terms of biological role, involved in the archaeal biosynthesis of heme. Catalyzes the oxiation of precorrin-2 into sirohydroclorin. The sequence is that of Precorrin-2 dehydrogenase from Methanosarcina barkeri (strain Fusaro / DSM 804).